The chain runs to 206 residues: LexA repressor (206 aa).

Positions 28–48 form a DNA-binding region, H-T-H motif; sequence RAEIATRLGFKSANAAEEHLK. Catalysis depends on for autocatalytic cleavage activity residues Ser123 and Lys160.

It belongs to the peptidase S24 family. As to quaternary structure, homodimer.

The catalysed reaction is Hydrolysis of Ala-|-Gly bond in repressor LexA.. Its function is as follows. Represses a number of genes involved in the response to DNA damage (SOS response), including recA and lexA. In the presence of single-stranded DNA, RecA interacts with LexA causing an autocatalytic cleavage which disrupts the DNA-binding part of LexA, leading to derepression of the SOS regulon and eventually DNA repair. The chain is LexA repressor from Shewanella sp. (strain MR-7).